Consider the following 701-residue polypeptide: Polyribonucleotide nucleotidyltransferase (701 aa).

Residues Asp487 and Asp493 each coordinate Mg(2+). The KH domain occupies 554-613 (PTMLAMKIDQDKIRDVIGKGGATIRAICEETKASIDIEDDGSIKIFGETKEAAEAAKQRV). Positions 623–691 (GKIYVGKVER…NRGRIKLSIK (69 aa)) constitute an S1 motif domain.

This sequence belongs to the polyribonucleotide nucleotidyltransferase family. As to quaternary structure, component of the RNA degradosome, which is a multiprotein complex involved in RNA processing and mRNA degradation. The cofactor is Mg(2+).

It localises to the cytoplasm. The enzyme catalyses RNA(n+1) + phosphate = RNA(n) + a ribonucleoside 5'-diphosphate. Functionally, involved in mRNA degradation. Catalyzes the phosphorolysis of single-stranded polyribonucleotides processively in the 3'- to 5'-direction. In Stutzerimonas stutzeri (strain A1501) (Pseudomonas stutzeri), this protein is Polyribonucleotide nucleotidyltransferase.